The chain runs to 447 residues: Putative branched-chain amino acid carrier protein SAB1263c (447 aa).

The next 12 membrane-spanning stretches (helical) occupy residues 6-26 (WVIG…IFPP), 40-60 (ILAF…VGAL), 74-94 (PKFS…LFAI), 114-134 (SSIA…YICL), 143-163 (IGSL…IKGY), 193-213 (GYLT…VNAV), 229-249 (LTAG…LGYI), 290-310 (LLGI…IGAV), 326-346 (FVLV…NAVI), 350-370 (IPVL…ILIA), 382-402 (IPVI…LGWL), and 417-437 (LEWF…GIFV).

This sequence belongs to the branched chain amino acid transporter family.

The protein resides in the cell membrane. In terms of biological role, component of the transport system for branched-chain amino acids (leucine, isoleucine and valine), which is coupled to a proton motive force (Potential). Contributes to NaCl tolerance. In Staphylococcus aureus (strain bovine RF122 / ET3-1), this protein is Putative branched-chain amino acid carrier protein SAB1263c.